The following is a 283-amino-acid chain: Bifunctional protein FolD (283 aa).

NADP(+) is bound by residues 165–167, Ser-190, and Val-231; that span reads GRS.

This sequence belongs to the tetrahydrofolate dehydrogenase/cyclohydrolase family. In terms of assembly, homodimer.

The enzyme catalyses (6R)-5,10-methylene-5,6,7,8-tetrahydrofolate + NADP(+) = (6R)-5,10-methenyltetrahydrofolate + NADPH. The catalysed reaction is (6R)-5,10-methenyltetrahydrofolate + H2O = (6R)-10-formyltetrahydrofolate + H(+). It functions in the pathway one-carbon metabolism; tetrahydrofolate interconversion. Functionally, catalyzes the oxidation of 5,10-methylenetetrahydrofolate to 5,10-methenyltetrahydrofolate and then the hydrolysis of 5,10-methenyltetrahydrofolate to 10-formyltetrahydrofolate. The protein is Bifunctional protein FolD of Anoxybacillus flavithermus (strain DSM 21510 / WK1).